Reading from the N-terminus, the 292-residue chain is UTP--glucose-1-phosphate uridylyltransferase (292 aa).

The protein belongs to the UDPGP type 2 family. Interacts with FloT.

It localises to the cell membrane. The protein resides in the membrane raft. The catalysed reaction is alpha-D-glucose 1-phosphate + UTP + H(+) = UDP-alpha-D-glucose + diphosphate. The protein operates within glycolipid metabolism; diglucosyl-diacylglycerol biosynthesis. In terms of biological role, catalyzes the formation of UDP-glucose from glucose-1-phosphate and UTP. This is an intermediate step in the biosynthesis of diglucosyl-diacylglycerol (Glc2-DAG), i.e. the predominant glycolipid found in B.subtilis membrane, which is also used as a membrane anchor for lipoteichoic acid (LTA). Has a role in the biosynthesis of all phosphate-containing envelope polymers, since UDP-glucose serves as a glucosyl donor not only for the biosynthesis of LTA but also for wall teichoic acids (WTAs). Is required for biofilm formation. This is likely due to another role of UDP-glucose, which might also act as a metabolic signal regulating biofilm formation or may be involved in some unknown biosynthetic pathway essential for biofilm formation, e.g. the synthesis of an exopolysaccharide. The polypeptide is UTP--glucose-1-phosphate uridylyltransferase (gtaB) (Bacillus subtilis (strain 168)).